The primary structure comprises 146 residues: Transcription antitermination protein NusB (146 aa).

The protein belongs to the NusB family.

In terms of biological role, involved in transcription antitermination. Required for transcription of ribosomal RNA (rRNA) genes. Binds specifically to the boxA antiterminator sequence of the ribosomal RNA (rrn) operons. The chain is Transcription antitermination protein NusB from Koribacter versatilis (strain Ellin345).